We begin with the raw amino-acid sequence, 397 residues long: Elongation factor Tu-1 (397 aa).

Positions 10–206 (KPHVNIGTIG…AVDESIPEPE (197 aa)) constitute a tr-type G domain. The G1 stretch occupies residues 19–26 (GHIDHGKT). Residue 19–26 (GHIDHGKT) participates in GTP binding. Thr-26 serves as a coordination point for Mg(2+). The tract at residues 62–66 (GITIS) is G2. The G3 stretch occupies residues 83 to 86 (DCPG). GTP-binding positions include 83-87 (DCPGH) and 138-141 (NKAD). The tract at residues 138–141 (NKAD) is G4. Residues 176-178 (SAL) are G5.

Belongs to the TRAFAC class translation factor GTPase superfamily. Classic translation factor GTPase family. EF-Tu/EF-1A subfamily. Monomer.

It localises to the cytoplasm. The enzyme catalyses GTP + H2O = GDP + phosphate + H(+). Its function is as follows. GTP hydrolase that promotes the GTP-dependent binding of aminoacyl-tRNA to the A-site of ribosomes during protein biosynthesis. The protein is Elongation factor Tu-1 of Streptomyces ramocissimus.